The sequence spans 318 residues: Taste receptor type 2 member 14 (318 aa).

The Extracellular segment spans residues 1–7 (MGGVIKN). Residues 8–28 (ISTFVLIVEFIIGNLGNSFIA) traverse the membrane as a helical segment. At 29-55 (LVNCIDWVKRRKISLVDQLLTALAISR) the chain is on the cytoplasmic side. Residues 56–76 (ISLVWLIFGSWCVSAFFPALF) form a helical membrane-spanning segment. Residues 77–87 (ATEKMFRMLTN) are Extracellular-facing. Residues T86 and W89 each contribute to the cholesterol site. The chain crosses the membrane as a helical span at residues 88 to 108 (IWAVTNHFSVWLATGLGTFYF). Residues 109–129 (LKIANFSNSIFIYLKWRVKKV) lie on the Cytoplasmic side of the membrane. The helical transmembrane segment at 130 to 150 (VLVLLLVTSVFLFLNIALINI) threads the bilayer. Over 151 to 184 (HINASINGYGGNKTCSSDSNDFTRFSSLIALTSS) the chain is Extracellular. N-linked (GlcNAc...) asparagine glycosylation is found at N153 and N162. A cholesterol-binding site is contributed by A180. A helical membrane pass occupies residues 185-205 (VFIFIPFILSLAIFLLLTFSL). Topologically, residues 206-232 (WKHCKKMQHTVKASGDASTKAHRGVMQ) are cytoplasmic. A helical membrane pass occupies residues 233 to 253 (TVIAFLLLYPIFSLSFFIAVW). At 254 to 261 (TSGWLEEN) the chain is on the extracellular side. A helical membrane pass occupies residues 262–282 (LIILSQVMGMAYPSCHSCILI). The cholesterol site is built by L265 and V268. The Cytoplasmic portion of the chain corresponds to 283-317 (LGNKKLRQASLSVLWWLKYRFKDGEPSGHKGFRES).

The protein belongs to the G-protein coupled receptor T2R family. Core component of the TAS2R14-GNAI1 complex, consisting of TAS2R14, GNAI1, GNB1 and GNG2; within the complex interacts with GNAI1. Core component of the TAS2R14-GNAT3 complex, consisting of TAS2R14, GNAT3, GNB1 and GNG2; within the complex interacts with GNAT3. Core component of the TAS2R14-GNAS2 complex, consisting of TAS2R14, GNAS2, GNB1 and GNG2; within the complex interacts with GNAS2.

The protein resides in the membrane. It catalyses the reaction Ca(2+)(in) = Ca(2+)(out). The enzyme catalyses 3',5'-cyclic AMP(in) = 3',5'-cyclic AMP(out). With respect to regulation, basal activity is enhanced by binding to bitter tastants, such as flufenamic acid and aristolochic acid. Regulated by cholesterol in a concentration-dependent manner. Functionally, gustducin-linked G-protein coupled receptor that plays a role in the perception of bitterness. The activity of this receptor stimulates GNAT3, activating the gustducin G-protein pathway. Likely plays a role in sensing the chemical composition of the gastrointestinal content and other extra-oral tissues via the inhibitory G-protein pathways. In Pongo pygmaeus (Bornean orangutan), this protein is Taste receptor type 2 member 14 (TAS2R14).